Reading from the N-terminus, the 201-residue chain is Hydroxymethylphosphonate dioxygenase (201 aa).

Residues H47, H71, D72, H94, H117, and D174 each coordinate Fe cation.

The cofactor is Fe(2+).

The catalysed reaction is hydroxymethylphosphonate + O2 = formate + phosphate + 2 H(+). The enzyme catalyses (1R)-(2-amino-1-hydroxyethyl)phosphonate + O2 = glycine + phosphate + 2 H(+). It carries out the reaction (1R)-(1-hydroxyethyl)phosphonate + O2 = acetate + phosphate + 2 H(+). Part of an oxidative pathway for utilization of methylphosphonic acid as a phosphate source. Catalyzes the oxidation of hydroxymethylphosphonic acid to produce formate and phosphate. Can also use (1R)-(2-amino-1-hydroxyethyl)phosphonic acid and (R)-1-hydroxyethylphosphonic acid with similar catalytic efficiency. The chain is Hydroxymethylphosphonate dioxygenase from Gimesia maris (strain ATCC 29201 / DSM 8797 / 534-30) (Planctomyces maris).